The following is a 418-amino-acid chain: Probable carboxypeptidase AFLA_000940 (418 aa).

Residues 1–18 (MKATDLFHVTVLVAGALA) form the signal peptide. An N-linked (GlcNAc...) asparagine glycan is attached at N74. Zn(2+) is bound at residue D147. N168 carries an N-linked (GlcNAc...) asparagine glycan. Residue E179 is the Proton acceptor of the active site. A Zn(2+)-binding site is contributed by E180.

This sequence belongs to the peptidase M20A family. It depends on Zn(2+) as a cofactor.

It is found in the secreted. The polypeptide is Probable carboxypeptidase AFLA_000940 (Aspergillus flavus (strain ATCC 200026 / FGSC A1120 / IAM 13836 / NRRL 3357 / JCM 12722 / SRRC 167)).